A 143-amino-acid chain; its full sequence is 3-dehydroquinate dehydratase (143 aa).

Catalysis depends on Y22, which acts as the Proton acceptor. N73, H79, and D86 together coordinate substrate. The active-site Proton donor is the H99. Substrate contacts are provided by residues 100-101 (IS) and R110.

Belongs to the type-II 3-dehydroquinase family. As to quaternary structure, homododecamer.

The catalysed reaction is 3-dehydroquinate = 3-dehydroshikimate + H2O. It functions in the pathway metabolic intermediate biosynthesis; chorismate biosynthesis; chorismate from D-erythrose 4-phosphate and phosphoenolpyruvate: step 3/7. Its function is as follows. Catalyzes a trans-dehydration via an enolate intermediate. The sequence is that of 3-dehydroquinate dehydratase from Salinispora arenicola (strain CNS-205).